The sequence spans 392 residues: Glyceraldehyde-3-phosphate dehydrogenase A, chloroplastic (392 aa).

Residues 1–56 constitute a chloroplast transit peptide; sequence NSSLQVSNKGFSEFSGLRTSSAIPFGRKTNDDLLSVVAFQTSVIGGGNSKRGVVEA. NADP(+) contacts are provided by residues 67–68, aspartate 91, and arginine 136; that span reads RI. Residues 208 to 210, threonine 239, arginine 254, 267 to 268, and arginine 290 each bind D-glyceraldehyde 3-phosphate; these read SCT and TG. Cysteine 209 (nucleophile) is an active-site residue. An NADP(+)-binding site is contributed by asparagine 372.

It belongs to the glyceraldehyde-3-phosphate dehydrogenase family. In terms of assembly, tetramer of either four A chains (GAPDH 2) or two A and two B chains (GAPDH 1).

It is found in the plastid. It localises to the chloroplast. It catalyses the reaction D-glyceraldehyde 3-phosphate + phosphate + NADP(+) = (2R)-3-phospho-glyceroyl phosphate + NADPH + H(+). It functions in the pathway carbohydrate biosynthesis; Calvin cycle. The polypeptide is Glyceraldehyde-3-phosphate dehydrogenase A, chloroplastic (GAPA) (Nicotiana tabacum (Common tobacco)).